The following is a 511-amino-acid chain: Glucose-6-phosphate 1-dehydrogenase, cytoplasmic isoform (511 aa).

NADP(+) is bound by residues 36–43 (GASGDLAK), Arg-71, Tyr-151, and Lys-178. D-glucose 6-phosphate contacts are provided by residues Lys-178, 208 to 212 (HYLGK), Glu-246, and Asp-265. The Proton acceptor role is filled by His-270. Lys-353 contributes to the NADP(+) binding site. The D-glucose 6-phosphate site is built by Lys-356 and Arg-361. Residues Lys-362, Arg-366, and Arg-390 each coordinate NADP(+). A D-glucose 6-phosphate-binding site is contributed by Gln-392. NADP(+) contacts are provided by residues 398-400 (YMK), 418-420 (DLS), Arg-484, and Trp-506.

Belongs to the glucose-6-phosphate dehydrogenase family. As to quaternary structure, homotetramer. As to expression, found in tubers, stolons, roots, and flower buds.

The protein resides in the cytoplasm. It catalyses the reaction D-glucose 6-phosphate + NADP(+) = 6-phospho-D-glucono-1,5-lactone + NADPH + H(+). It functions in the pathway carbohydrate degradation; pentose phosphate pathway; D-ribulose 5-phosphate from D-glucose 6-phosphate (oxidative stage): step 1/3. With respect to regulation, regulated by metabolites. Its function is as follows. Catalyzes the rate-limiting step of the oxidative pentose-phosphate pathway, which represents a route for the dissimilation of carbohydrates besides glycolysis. The main function of this enzyme is to generate NADPH for reductive biosyntheses. The polypeptide is Glucose-6-phosphate 1-dehydrogenase, cytoplasmic isoform (G6PDH) (Solanum tuberosum (Potato)).